The following is a 59-amino-acid chain: UPF0434 protein SO_2800 (59 aa).

It belongs to the UPF0434 family.

This is UPF0434 protein SO_2800 from Shewanella oneidensis (strain ATCC 700550 / JCM 31522 / CIP 106686 / LMG 19005 / NCIMB 14063 / MR-1).